The primary structure comprises 1136 residues: Nitric oxide synthase, inducible (1136 aa).

2 residues coordinate Zn(2+): Cys-107 and Cys-112. Heme b is bound at residue Cys-197. Positions 260, 369, 370, and 374 each coordinate L-arginine. (6R)-L-erythro-5,6,7,8-tetrahydrobiopterin is bound by residues Arg-378, Val-459, Trp-460, and Phe-473. Residue Tyr-488 participates in heme b binding. The calmodulin-binding stretch occupies residues 512-532; sequence LSILAKAVLLASLLLQKTMAA. One can recognise a Flavodoxin-like domain in the interval 536–674; the sequence is VTVIYATETG…AFRTWAVTAF (139 aa). 11 residues coordinate FMN: Thr-542, Glu-543, Thr-544, Lys-546, Ser-547, Ser-588, Thr-589, Ser-625, Cys-632, Glu-658, and Gln-662. Residues 727–967 enclose the FAD-binding FR-type domain; it reads KNVIPMKLKF…VRSADGFRLP (241 aa). Arg-747 is a binding site for NADP(+). Residues His-769, Arg-903, Tyr-905, Ser-906, Thr-921, Ala-923, Tyr-927, Val-940, Cys-941, and Ser-942 each coordinate FAD. NADP(+)-binding residues include Thr-981, Arg-1014, Ser-1043, Arg-1044, Lys-1050, Tyr-1052, Gln-1054, and Asp-1087.

Belongs to the NOS family. In terms of assembly, homodimer. Requires heme b as cofactor. The cofactor is FAD. FMN is required as a cofactor. (6R)-L-erythro-5,6,7,8-tetrahydrobiopterin serves as cofactor.

The protein localises to the cytoplasm. It localises to the cytosol. It catalyses the reaction 2 L-arginine + 3 NADPH + 4 O2 + H(+) = 2 L-citrulline + 2 nitric oxide + 3 NADP(+) + 4 H2O. With respect to regulation, not stimulated by calcium/calmodulin. Produces nitric oxide (NO) which is a messenger molecule with diverse functions throughout the body. NO may serve as both a paracrine and autocrine signal for modulating osteoclast bone resorption. Also has nitrosylase activity and mediates cysteine S-nitrosylation of cytoplasmic target proteins such COX2. The sequence is that of Nitric oxide synthase, inducible (NOS2) from Gallus gallus (Chicken).